Here is a 319-residue protein sequence, read N- to C-terminus: Urease accessory protein UreD (319 aa).

The segment at 254–273 is disordered; that stretch reads PDPVGSPAARRESVPAKRAE. Residues 262–273 are compositionally biased toward basic and acidic residues; it reads ARRESVPAKRAE.

The protein belongs to the UreD family. As to quaternary structure, ureD, UreF and UreG form a complex that acts as a GTP-hydrolysis-dependent molecular chaperone, activating the urease apoprotein by helping to assemble the nickel containing metallocenter of UreC. The UreE protein probably delivers the nickel.

It localises to the cytoplasm. Its function is as follows. Required for maturation of urease via the functional incorporation of the urease nickel metallocenter. The protein is Urease accessory protein UreD of Frankia casuarinae (strain DSM 45818 / CECT 9043 / HFP020203 / CcI3).